The following is a 153-amino-acid chain: Mediator of RNA polymerase II transcription subunit 22 (153 aa).

The protein belongs to the Mediator complex subunit 22 family. In terms of assembly, component of the Mediator complex.

It is found in the nucleus. Component of the Mediator complex, a coactivator involved in the regulated transcription of nearly all RNA polymerase II-dependent genes. Mediator functions as a bridge to convey information from gene-specific regulatory proteins to the basal RNA polymerase II transcription machinery. Mediator is recruited to promoters by direct interactions with regulatory proteins and serves as a scaffold for the assembly of a functional preinitiation complex with RNA polymerase II and the general transcription factors. This chain is Mediator of RNA polymerase II transcription subunit 22 (mdt-22), found in Caenorhabditis briggsae.